A 221-amino-acid chain; its full sequence is Pleckstrin homology domain-containing family B member 2 (221 aa).

A PH domain is found at 2 to 109 (AFVKSGWLLR…WKFTLQDSRT (108 aa)). Residue K20 coordinates a 1,2-diacyl-sn-glycero-3-phospho-L-serine.

Highly expressed in brain, retina, heart and kidney. Detected at lower levels in lung, muscle and nerve.

The protein resides in the recycling endosome membrane. Its function is as follows. Involved in retrograde transport of recycling endosomes. This chain is Pleckstrin homology domain-containing family B member 2 (Plekhb2), found in Mus musculus (Mouse).